A 445-amino-acid polypeptide reads, in one-letter code: Ubiquitin carboxyl-terminal hydrolase MINDY-3 (445 aa).

The active-site Nucleophile is cysteine 51. Serine 125 carries the phosphoserine modification. Histidine 287 serves as the catalytic Proton acceptor.

Belongs to the MINDY deubiquitinase family. FAM188 subfamily. As to quaternary structure, interacts with COPS5.

It localises to the nucleus. The enzyme catalyses Thiol-dependent hydrolysis of ester, thioester, amide, peptide and isopeptide bonds formed by the C-terminal Gly of ubiquitin (a 76-residue protein attached to proteins as an intracellular targeting signal).. In terms of biological role, hydrolase that can remove 'Lys-48'-linked conjugated ubiquitin from proteins. This chain is Ubiquitin carboxyl-terminal hydrolase MINDY-3 (MINDY3), found in Bos taurus (Bovine).